We begin with the raw amino-acid sequence, 496 residues long: Protein TOO MANY MOUTHS (496 aa).

An N-terminal signal peptide occupies residues 1-23; the sequence is MARYEFFRQIFIVLSIVSPLVRS. The Extracellular portion of the chain corresponds to 24–473; sequence FTVITSDSTA…ATDVSSTSKS (450 aa). 10 LRR repeats span residues 158-182, 183-208, 210-228, 229-252, 254-276, 277-300, 302-325, 326-350, 351-373, and 375-401; these read GSSL…LGNL, TNLK…RFSG, RSLD…GFVL, PALS…LTSC, SLIK…INRL, NQLV…LQGL, SLQA…AFKG, LKNL…LTRL, NSLR…EFRD, and KHLS…VWRM. N-linked (GlcNAc...) asparagine glycans are attached at residues asparagine 181 and asparagine 196. The N-linked (GlcNAc...) asparagine glycan is linked to asparagine 362. Residues 438–464 are disordered; the sequence is AETSRPAPSGTVQHLSREEDGALPDGA. A helical transmembrane segment spans residues 474-494; the sequence is LGFSYLSAFFLVFPNFIFMLI. The Cytoplasmic portion of the chain corresponds to 495-496; that stretch reads SS.

It belongs to the RLP family. In terms of assembly, forms heterodimer with ERECTA or ERL1 through their extracellular domains. Not able to form homodimer. Interacts with EPF2 but not with EPF1. Interacts with SERK1, SERK2, SERK3/BAK1 and SERK4. Interacts with EPFL9/STOMAGEN. In epidermal cells of developing shoots and leaves, but not in roots. Expressed in the stomatal cell lineage in the developing epidermis. Accumulates strongly in meristemoid mother cells (MMC) and meristemoids, somewhat less in meristemoid sister cells (stomatal-lineage ground cells, SLGC), and is barely detected in pavement cells.

It localises to the cell membrane. Its function is as follows. Promotes cell fate progression in stomatal development. In leaves, needed to correctly orient spacing divisions, to limit the number of asymmetric divisions in neighbor cells, and to promote the asymmetric (amplifying) divisions of meristemoids. In stems, promotes the conversion of meristemoids into guard mother cells (GMC). Positively regulates CAPRICE (CPC) expression in differentiating stomaless-forming cell files. Forms constitutive complexes with ERECTA and ERL1 involved in the recognition of the stomatal regulatory peptides EPF1, EPF2 and EPFL9/STOMAGEN. Modulates the activity of the ligand-receptor pairs EPF2-ERECTA and EPF1-ERL1 in stomatal development. Functions in a combinatorial specific manner with the ERECTA-family (ERf) receptor kinases in the regulation of the immune response. This Arabidopsis thaliana (Mouse-ear cress) protein is Protein TOO MANY MOUTHS.